Here is a 316-residue protein sequence, read N- to C-terminus: MLNVILLGTGGGMPMPNRFLSSVVMNFKGRKILLDCGEGTQVTMRVNGTGFKSIDIICISHLHGDHIYGLPGLLSTIGNSGRVEDIYIIGPKGIKEVIEGFLITLPYLPYKLNILEDASNLEFMVKKEKMELVEEDEKISSDLSIKTLELDHSSPCLGYSFNIRRGRKFNLEKALMNKVPKEVWSKLQRNEEVSLNGVKYYSYMVLGDERKGIKLSYTTDTRPTEDIPGFIKESDLYICEGTYGSEEDMHKAIKNKHMTFKEAANLAKRGQVKELLLTHFSPAINDPKEFINNAREAFENSHVGSDGEERVLNFKK.

7 residues coordinate Zn(2+): His-61, His-63, Asp-65, His-66, His-152, Asp-220, and His-279. The active-site Proton acceptor is Asp-65.

The protein belongs to the RNase Z family. Homodimer. Requires Zn(2+) as cofactor.

The catalysed reaction is Endonucleolytic cleavage of RNA, removing extra 3' nucleotides from tRNA precursor, generating 3' termini of tRNAs. A 3'-hydroxy group is left at the tRNA terminus and a 5'-phosphoryl group is left at the trailer molecule.. Its function is as follows. Zinc phosphodiesterase, which displays some tRNA 3'-processing endonuclease activity. Probably involved in tRNA maturation, by removing a 3'-trailer from precursor tRNA. The polypeptide is Ribonuclease Z (Clostridium perfringens (strain ATCC 13124 / DSM 756 / JCM 1290 / NCIMB 6125 / NCTC 8237 / Type A)).